The primary structure comprises 273 residues: Putative pyruvate, phosphate dikinase regulatory protein (273 aa).

Position 149–156 (149–156 (GPSRTSKT)) interacts with ADP.

Belongs to the pyruvate, phosphate/water dikinase regulatory protein family. PDRP subfamily.

The enzyme catalyses N(tele)-phospho-L-histidyl/L-threonyl-[pyruvate, phosphate dikinase] + ADP = N(tele)-phospho-L-histidyl/O-phospho-L-threonyl-[pyruvate, phosphate dikinase] + AMP + H(+). It catalyses the reaction N(tele)-phospho-L-histidyl/O-phospho-L-threonyl-[pyruvate, phosphate dikinase] + phosphate + H(+) = N(tele)-phospho-L-histidyl/L-threonyl-[pyruvate, phosphate dikinase] + diphosphate. Its function is as follows. Bifunctional serine/threonine kinase and phosphorylase involved in the regulation of the pyruvate, phosphate dikinase (PPDK) by catalyzing its phosphorylation/dephosphorylation. The sequence is that of Putative pyruvate, phosphate dikinase regulatory protein from Rickettsia bellii (strain RML369-C).